The following is a 222-amino-acid chain: uncharacterized protein (222 aa).

This is an uncharacterized protein from Methanocaldococcus jannaschii (strain ATCC 43067 / DSM 2661 / JAL-1 / JCM 10045 / NBRC 100440) (Methanococcus jannaschii).